A 191-amino-acid chain; its full sequence is Inosine triphosphate pyrophosphatase (191 aa).

12–17 is an ITP binding site; the sequence is TGNKNK. Glu40 contributes to the Mg(2+) binding site. Residues Lys52, 68 to 69, Lys85, 144 to 147, Lys167, and 172 to 173 contribute to the ITP site; these read DS, FGWE, and HR.

This sequence belongs to the HAM1 NTPase family. In terms of assembly, homodimer. Mg(2+) is required as a cofactor. Requires Mn(2+) as cofactor.

It is found in the cytoplasm. It localises to the nucleus. It catalyses the reaction ITP + H2O = IMP + diphosphate + H(+). It carries out the reaction dITP + H2O = dIMP + diphosphate + H(+). The enzyme catalyses XTP + H2O = XMP + diphosphate + H(+). Pyrophosphatase that hydrolyzes non-canonical purine nucleotides such as inosine triphosphate (ITP), deoxyinosine triphosphate (dITP) or xanthosine 5'-triphosphate (XTP) to their respective monophosphate derivatives. The enzyme does not distinguish between the deoxy- and ribose forms. Probably excludes non-canonical purines from RNA and DNA precursor pools, thus preventing their incorporation into RNA and DNA and avoiding chromosomal lesions. The chain is Inosine triphosphate pyrophosphatase from Aspergillus oryzae (strain ATCC 42149 / RIB 40) (Yellow koji mold).